The sequence spans 353 residues: UDP-3-O-acylglucosamine N-acyltransferase (353 aa).

Catalysis depends on histidine 242, which acts as the Proton acceptor.

This sequence belongs to the transferase hexapeptide repeat family. LpxD subfamily. As to quaternary structure, homotrimer.

The catalysed reaction is a UDP-3-O-[(3R)-3-hydroxyacyl]-alpha-D-glucosamine + a (3R)-hydroxyacyl-[ACP] = a UDP-2-N,3-O-bis[(3R)-3-hydroxyacyl]-alpha-D-glucosamine + holo-[ACP] + H(+). The protein operates within bacterial outer membrane biogenesis; LPS lipid A biosynthesis. Its function is as follows. Catalyzes the N-acylation of UDP-3-O-acylglucosamine using 3-hydroxyacyl-ACP as the acyl donor. Is involved in the biosynthesis of lipid A, a phosphorylated glycolipid that anchors the lipopolysaccharide to the outer membrane of the cell. The protein is UDP-3-O-acylglucosamine N-acyltransferase of Pseudomonas aeruginosa (strain LESB58).